A 359-amino-acid chain; its full sequence is Isopentenyl-diphosphate delta-isomerase (359 aa).

12–13 is a binding site for substrate; that stretch reads RK. FMN contacts are provided by residues Ser-68, 69–71, Ser-99, and Asn-128; that span reads AMT. 99-101 is a binding site for substrate; sequence SQR. Substrate is bound at residue Gln-162. Residue Glu-163 participates in Mg(2+) binding. FMN-binding positions include Lys-194, Thr-224, 277–279, and 298–299; these read GIR and AL.

This sequence belongs to the IPP isomerase type 2 family. In terms of assembly, homooctamer. Dimer of tetramers. The cofactor is FMN. Requires NADPH as cofactor. Mg(2+) serves as cofactor.

Its subcellular location is the cytoplasm. It catalyses the reaction isopentenyl diphosphate = dimethylallyl diphosphate. Its function is as follows. Involved in the biosynthesis of isoprenoids. Catalyzes the 1,3-allylic rearrangement of the homoallylic substrate isopentenyl (IPP) to its allylic isomer, dimethylallyl diphosphate (DMAPP). The protein is Isopentenyl-diphosphate delta-isomerase of Methanoregula boonei (strain DSM 21154 / JCM 14090 / 6A8).